The chain runs to 319 residues: Glycine--tRNA ligase alpha subunit (319 aa).

It belongs to the class-II aminoacyl-tRNA synthetase family. Tetramer of two alpha and two beta subunits.

The protein localises to the cytoplasm. The catalysed reaction is tRNA(Gly) + glycine + ATP = glycyl-tRNA(Gly) + AMP + diphosphate. The protein is Glycine--tRNA ligase alpha subunit of Coxiella burnetii (strain CbuK_Q154) (Coxiella burnetii (strain Q154)).